The sequence spans 152 residues: Ribosome maturation factor RimP (152 aa).

Belongs to the RimP family.

It is found in the cytoplasm. Required for maturation of 30S ribosomal subunits. This chain is Ribosome maturation factor RimP, found in Pseudoalteromonas atlantica (strain T6c / ATCC BAA-1087).